A 435-amino-acid chain; its full sequence is Xylose isomerase (435 aa).

Residues His100 and Asp103 contribute to the active site. Mg(2+) is bound by residues Glu231, Glu267, His270, Asp295, Asp306, Asp308, and Asp338.

Belongs to the xylose isomerase family. Homotetramer. Mg(2+) serves as cofactor.

The protein localises to the cytoplasm. The catalysed reaction is alpha-D-xylose = alpha-D-xylulofuranose. This is Xylose isomerase from Brucella suis (strain ATCC 23445 / NCTC 10510).